A 268-amino-acid polypeptide reads, in one-letter code: Tryptophan synthase alpha chain (268 aa).

Residues glutamate 49 and aspartate 60 each act as proton acceptor in the active site.

Belongs to the TrpA family. In terms of assembly, tetramer of two alpha and two beta chains.

It catalyses the reaction (1S,2R)-1-C-(indol-3-yl)glycerol 3-phosphate + L-serine = D-glyceraldehyde 3-phosphate + L-tryptophan + H2O. Its pathway is amino-acid biosynthesis; L-tryptophan biosynthesis; L-tryptophan from chorismate: step 5/5. The alpha subunit is responsible for the aldol cleavage of indoleglycerol phosphate to indole and glyceraldehyde 3-phosphate. In Shigella boydii serotype 18 (strain CDC 3083-94 / BS512), this protein is Tryptophan synthase alpha chain.